A 61-amino-acid polypeptide reads, in one-letter code: Small ribosomal subunit protein bS21 (61 aa).

The segment at 36–61 (EHYESPSVKRKKKAEAARKRKYKYGR) is disordered. Basic residues predominate over residues 43-61 (VKRKKKAEAARKRKYKYGR).

It belongs to the bacterial ribosomal protein bS21 family.

This Caldanaerobacter subterraneus subsp. tengcongensis (strain DSM 15242 / JCM 11007 / NBRC 100824 / MB4) (Thermoanaerobacter tengcongensis) protein is Small ribosomal subunit protein bS21 (rpsU).